A 524-amino-acid polypeptide reads, in one-letter code: GMP synthase [glutamine-hydrolyzing] (524 aa).

Residues Lys5–Thr195 form the Glutamine amidotransferase type-1 domain. Catalysis depends on Cys82, which acts as the Nucleophile. Catalysis depends on residues His169 and Glu171. Positions Trp196 to Arg389 constitute a GMPS ATP-PPase domain. Ser223–Ser229 contributes to the ATP binding site.

As to quaternary structure, homodimer.

The enzyme catalyses XMP + L-glutamine + ATP + H2O = GMP + L-glutamate + AMP + diphosphate + 2 H(+). Its pathway is purine metabolism; GMP biosynthesis; GMP from XMP (L-Gln route): step 1/1. Its function is as follows. Catalyzes the synthesis of GMP from XMP. This Agathobacter rectalis (strain ATCC 33656 / DSM 3377 / JCM 17463 / KCTC 5835 / VPI 0990) (Eubacterium rectale) protein is GMP synthase [glutamine-hydrolyzing].